The following is a 1188-amino-acid chain: DNA-directed RNA polymerase II subunit 2 (1188 aa).

Position 800 (Asp800) interacts with Mg(2+). Disordered stretches follow at residues 852-871 (SYDK…VSGE) and 877-897 (KTTP…TRRD). Polar residues predominate over residues 879–892 (TPISQDEAQGQSSR). Zn(2+)-binding residues include Cys1124, Cys1127, Cys1142, and Cys1145. The segment at 1124–1145 (CEVCGLIAIANLKKNSFECRGC) adopts a C4-type zinc-finger fold.

This sequence belongs to the RNA polymerase beta chain family. Component of the RNA polymerase II complex consisting of at least 12 subunits.

It localises to the nucleus. It catalyses the reaction RNA(n) + a ribonucleoside 5'-triphosphate = RNA(n+1) + diphosphate. Its function is as follows. DNA-dependent RNA polymerase catalyzes the transcription of DNA into RNA using the four ribonucleoside triphosphates as substrates. Second largest component of RNA polymerase II which synthesizes mRNA precursors and many functional non-coding RNAs. Proposed to contribute to the polymerase catalytic activity and forms the polymerase active center together with the largest subunit. Pol II is the central component of the basal RNA polymerase II transcription machinery. It is composed of mobile elements that move relative to each other. NRPB2 is part of the core element with the central large cleft, the clamp element that moves to open and close the cleft and the jaws that are thought to grab the incoming DNA template. Functionally, essential for the completion of the three rounds of mitosis in female megaspores required for the development of mature gametophytes. The protein is DNA-directed RNA polymerase II subunit 2 (NRPB2) of Arabidopsis thaliana (Mouse-ear cress).